Reading from the N-terminus, the 88-residue chain is MSEERNTRKVYRGRVVSDKMDKTITVAVETYKNHPVYGKRVNYAKKFKAHDENNDAKLNDVVEIMETRPLSATKRFRLVRVVEKAVVL.

This sequence belongs to the universal ribosomal protein uS17 family. In terms of assembly, part of the 30S ribosomal subunit.

One of the primary rRNA binding proteins, it binds specifically to the 5'-end of 16S ribosomal RNA. The polypeptide is Small ribosomal subunit protein uS17 (Oenococcus oeni (strain ATCC BAA-331 / PSU-1)).